Reading from the N-terminus, the 57-residue chain is Protein translocase subunit SecE (57 aa).

The chain crosses the membrane as a helical span at residues Gly-33–Val-53.

This sequence belongs to the SecE/SEC61-gamma family. Component of the Sec protein translocase complex. Heterotrimer consisting of SecY (alpha), SecG (beta) and SecE (gamma) subunits. The heterotrimers can form oligomers, although 1 heterotrimer is thought to be able to translocate proteins. Interacts with the ribosome. May interact with SecDF, and other proteins may be involved.

Its subcellular location is the cell membrane. In terms of biological role, essential subunit of the Sec protein translocation channel SecYEG. Clamps together the 2 halves of SecY. May contact the channel plug during translocation. This chain is Protein translocase subunit SecE, found in Natronomonas pharaonis (strain ATCC 35678 / DSM 2160 / CIP 103997 / JCM 8858 / NBRC 14720 / NCIMB 2260 / Gabara) (Halobacterium pharaonis).